Reading from the N-terminus, the 105-residue chain is Probable guanidinium efflux system subunit GdnD (105 aa).

A run of 4 helical transmembrane segments spans residues 1-21 (MLHW…VALM), 32-52 (WVLL…YAME), 59-79 (AYAV…ILFY), and 85-105 (AKRI…KILS).

Belongs to the drug/metabolite transporter (DMT) superfamily. Small multidrug resistance (SMR) (TC 2.A.7.1) family. YkkC/YkkD subfamily. As to quaternary structure, the efflux pump is composed of GdnC and GdnD.

Its subcellular location is the cell membrane. Probably involved in guanidinium transport. In vitro, confers resistance to a broad range of toxic compounds such as cationic dyes, neutral and anionic antimicrobials. In Bacillus subtilis (strain 168), this protein is Probable guanidinium efflux system subunit GdnD.